The sequence spans 168 residues: Cilia- and flagella-associated protein HOATZ (168 aa).

The disordered stretch occupies residues 142–168 (PKDKVPKSKEVLSESGLRDQEEVKALE).

It belongs to the HOATZ family. In terms of tissue distribution, specifically expressed in tissues with motile cilia and flagella, such as brain ependyma, lung, testis, and oviduct but not in whole brain, liver,kidney, spleen, and eyeball.

It localises to the cytoplasm. The protein resides in the cell projection. The protein localises to the cilium. Functionally, required for motile ciliogenesis and flagellar genesis by mediating the maturation of the glycolytic enzyme ENO4. The chain is Cilia- and flagella-associated protein HOATZ from Mus musculus (Mouse).